The following is a 397-amino-acid chain: Erythromycin C-12 hydroxylase (397 aa).

A substrate-binding site is contributed by 74 to 75 (HE). The heme site is built by histidine 81 and arginine 85. A substrate-binding site is contributed by glutamine 278. Heme is bound at residue arginine 279. Positions 307–322 (RDSDAHDDPDRFDPSR) are enriched in basic and acidic residues. The segment at 307–326 (RDSDAHDDPDRFDPSRKSGG) is disordered. Heme contacts are provided by histidine 337 and cysteine 339.

Belongs to the cytochrome P450 family. As to quaternary structure, monomer. Requires heme b as cofactor.

The catalysed reaction is erythromycin D + NADPH + O2 + H(+) = erythromycin C + NADP(+) + H2O. It functions in the pathway antibiotic biosynthesis; erythromycin biosynthesis. Responsible for the C-12 hydroxylation of the macrolactone ring of erythromycin. Thus, EryK catalyzes the hydroxylation of erythromycin D (ErD) at the C-12 position to produce erythromycin C (ErC). Erythromycin B (ErB) is not a substrate for this enzyme. The chain is Erythromycin C-12 hydroxylase (eryK) from Saccharopolyspora erythraea (strain ATCC 11635 / DSM 40517 / JCM 4748 / NBRC 13426 / NCIMB 8594 / NRRL 2338).